The primary structure comprises 3255 residues: Genome polyprotein (3255 aa).

The Peptidase S30 domain occupies 292–437 (VMNQQTLMAF…HSITHRMVQY (146 aa)). Residues His345, Asp354, and Ser388 each act as for P1 proteinase activity in the active site. Residues 489–492 (KITC) carry the Involved in interaction with stylet and aphid transmission motif. The short motif at 747 to 749 (PTK) is the Involved in virions binding and aphid transmission element. The region spanning 773–895 (MFVTKDGYCY…ESEMQHYRVG (123 aa)) is the Peptidase C6 domain. Catalysis depends on for helper component proteinase activity residues Cys781 and His854. The Helicase ATP-binding domain occupies 1397–1549 (EIAHNEYRDI…PMHMVDIATE (153 aa)). 1410-1417 (GGVGSGKS) serves as a coordination point for ATP. Residues 1499 to 1502 (DECH) carry the DECH box motif. Residues 1568–1727 (DATKKGDNIL…GLPVMTSNVS (160 aa)) form the Helicase C-terminal domain. The short motif at 2062 to 2069 (EKGKKSGK) is the Nuclear localization signal element. Tyr2084 bears the O-(5'-phospho-RNA)-tyrosine mark. In terms of domain architecture, Peptidase C4 spans 2215–2433 (SKTLFRGLRD…MVWGGINLIN (219 aa)). Active-site for nuclear inclusion protein A activity residues include His2260, Asp2295, and Cys2365. The 125-residue stretch at 2699 to 2823 (WVYCDADGSQ…AIKPEHESLL (125 aa)) folds into the RdRp catalytic domain. Residues 2980–3028 (AKLDAGQGSKTDDKQKNSADPKDNIITEKGSGSGQMKKDDDINAGLHGK) form a disordered region. Positions 2989-3005 (KTDDKQKNSADPKDNII) are enriched in basic and acidic residues. The residue at position 3237 (Thr3237) is a Phosphothreonine.

It belongs to the potyviridae genome polyprotein family. In terms of assembly, interacts with host eIF4E protein (via cap-binding region); this interaction mediates the translation of the VPg-viral RNA conjugates. Part of a complex that comprises VPg, RNA, host EIF4E and EIF4G; this interaction mediates the translation of the VPg-viral RNA conjugates. In terms of processing, VPg is uridylylated by the polymerase and is covalently attached to the 5'-end of the genomic RNA. This uridylylated form acts as a nucleotide-peptide primer for the polymerase. Post-translationally, potyviral RNA is expressed as two polyproteins which undergo post-translational proteolytic processing. Genome polyprotein is processed by NIa-pro, P1 and HC-pro proteinases resulting in the production of at least ten individual proteins. P3N-PIPO polyprotein is cleaved by P1 and HC-pro proteinases resulting in the production of three individual proteins. The P1 proteinase and the HC-pro cleave only their respective C-termini autocatalytically. 6K1 is essential for proper proteolytic separation of P3 from CI.

Its subcellular location is the host cytoplasmic vesicle. The protein localises to the host nucleus. The protein resides in the virion. It catalyses the reaction RNA(n) + a ribonucleoside 5'-triphosphate = RNA(n+1) + diphosphate. The catalysed reaction is Hydrolyzes glutaminyl bonds, and activity is further restricted by preferences for the amino acids in P6 - P1' that vary with the species of potyvirus, e.g. Glu-Xaa-Xaa-Tyr-Xaa-Gln-|-(Ser or Gly) for the enzyme from tobacco etch virus. The natural substrate is the viral polyprotein, but other proteins and oligopeptides containing the appropriate consensus sequence are also cleaved.. The enzyme catalyses Hydrolyzes a Gly-|-Gly bond at its own C-terminus, commonly in the sequence -Tyr-Xaa-Val-Gly-|-Gly, in the processing of the potyviral polyprotein.. In terms of biological role, required for aphid transmission and also has proteolytic activity. Only cleaves a Gly-Gly dipeptide at its own C-terminus. Interacts with virions and aphid stylets. Acts as a suppressor of RNA-mediated gene silencing, also known as post-transcriptional gene silencing (PTGS), a mechanism of plant viral defense that limits the accumulation of viral RNAs. May have RNA-binding activity. Has helicase activity. It may be involved in replication. Its function is as follows. Indispensable for virus replication. Reduces the abundance of host transcripts related to jasmonic acid biosynthesis therefore altering the host defenses. In order to increase its own stability, decreases host protein degradation pathways. Functionally, indispensable for virus replication. In terms of biological role, mediates the cap-independent, EIF4E-dependent translation of viral genomic RNAs. Binds to the cap-binding site of host EIF4E and thus interferes with the host EIF4E-dependent mRNA export and translation. VPg-RNA directly binds EIF4E and is a template for transcription. Also forms trimeric complexes with EIF4E-EIF4G, which are templates for translation. Has RNA-binding and proteolytic activities. Its function is as follows. An RNA-dependent RNA polymerase that plays an essential role in the virus replication. Functionally, involved in aphid transmission, cell-to-cell and systemis movement, encapsidation of the viral RNA and in the regulation of viral RNA amplification. In Lettuce mosaic virus (strain 0 / isolate French) (LMV), this protein is Genome polyprotein.